Reading from the N-terminus, the 297-residue chain is Tyrosine recombinase XerD (297 aa).

Residues 1-86 (MNDLIEDFLH…SLRSFFHYLM (86 aa)) enclose the Core-binding (CB) domain. The Tyr recombinase domain occupies 107-291 (GLPKVLNLDD…TKLRLKDVYK (185 aa)). Catalysis depends on residues Arg147, Lys171, His243, Arg246, and His269. Catalysis depends on Tyr278, which acts as the O-(3'-phospho-DNA)-tyrosine intermediate.

The protein belongs to the 'phage' integrase family. XerD subfamily. Forms a cyclic heterotetrameric complex composed of two molecules of XerC and two molecules of XerD.

The protein localises to the cytoplasm. Its function is as follows. Site-specific tyrosine recombinase, which acts by catalyzing the cutting and rejoining of the recombining DNA molecules. The XerC-XerD complex is essential to convert dimers of the bacterial chromosome into monomers to permit their segregation at cell division. It also contributes to the segregational stability of plasmids. The polypeptide is Tyrosine recombinase XerD (Listeria monocytogenes serotype 4b (strain F2365)).